Reading from the N-terminus, the 132-residue chain is Dinoflagellate viral nucleoprotein 5 (132 aa).

Residues 1 to 44 (MAAMKKAMKVKKSAKKSAKKSGKKGGMKKKAKRVSKVARGKRAK) are compositionally biased toward basic residues. Residues 1–84 (MAAMKKAMKV…KKQSEHGKKI (84 aa)) form a disordered region. A compositionally biased stretch (polar residues) spans 57–66 (GGLTKNSLVK).

In terms of processing, phosphorylated.

It localises to the nucleus. The protein resides in the chromosome. DNA-binding protein, which similarly to histones, may compact DNA into chromatin. The protein is Dinoflagellate viral nucleoprotein 5 of Hematodinium sp.